A 180-amino-acid polypeptide reads, in one-letter code: MASSVISSAAVATRSNVTQASMVAPFTGLKSSATFPVTKKQNLDITSIASNGGRVSCMQVWPPINMKKYETLSYLPDLSDEQLLSEIEYLLKNGWVPCLEFETEHGFVYRENNKSPGYYDGRYWTMWKLPMFGCTDATQVLAEVQEAKKAYPQAWVRIIGFDNVRQVQCISFIAYKPEGY.

Residues 1–56 (MASSVISSAAVATRSNVTQASMVAPFTGLKSSATFPVTKKQNLDITSIASNGGRVS) constitute a chloroplast transit peptide.

It belongs to the RuBisCO small chain family. In terms of assembly, heterohexadecamer of 8 large and 8 small subunits. (Microbial infection) Binds to tobamovirus movement protein; this interaction seems required for viral systemic movement.

It is found in the plastid. The protein localises to the chloroplast. It localises to the cell junction. The protein resides in the plasmodesma. Its function is as follows. RuBisCO catalyzes two reactions: the carboxylation of D-ribulose 1,5-bisphosphate, the primary event in carbon dioxide fixation, as well as the oxidative fragmentation of the pentose substrate. Both reactions occur simultaneously and in competition at the same active site. Although the small subunit is not catalytic it is essential for maximal activity. Involved in antiviral defenses. In Solanum lycopersicum (Tomato), this protein is Ribulose bisphosphate carboxylase small subunit, chloroplastic 2.